The following is a 253-amino-acid chain: Triosephosphate isomerase (253 aa).

9-11 (NWK) lines the substrate pocket. Histidine 94 functions as the Electrophile in the catalytic mechanism. Glutamate 163 serves as the catalytic Proton acceptor. Substrate-binding positions include glycine 169, serine 209, and 230-231 (GG).

This sequence belongs to the triosephosphate isomerase family. In terms of assembly, homodimer.

It is found in the cytoplasm. It carries out the reaction D-glyceraldehyde 3-phosphate = dihydroxyacetone phosphate. It participates in carbohydrate biosynthesis; gluconeogenesis. It functions in the pathway carbohydrate degradation; glycolysis; D-glyceraldehyde 3-phosphate from glycerone phosphate: step 1/1. In terms of biological role, involved in the gluconeogenesis. Catalyzes stereospecifically the conversion of dihydroxyacetone phosphate (DHAP) to D-glyceraldehyde-3-phosphate (G3P). The chain is Triosephosphate isomerase from Dehalococcoides mccartyi (strain ATCC BAA-2100 / JCM 16839 / KCTC 5957 / BAV1).